The following is a 20-amino-acid chain: Equinatoxin-3 (20 aa).

Positions 3–12 are plays an important role in the hemolytic activity; the sequence is AVAGAIIKGA. Residues 11-20 are N-terminal region; it reads GAALTFNVLQ.

It belongs to the actinoporin family. Sea anemone subfamily. As to quaternary structure, octamer or nonamer in membranes. Monomer in the soluble state.

The protein resides in the secreted. It localises to the nematocyst. It is found in the target cell membrane. In terms of biological role, pore-forming protein that forms cations-selective hydrophilic pores of around 1 nm and causes cardiac stimulation and cytolysis. Pore formation is a multi-step process that involves specific recognition of membrane sphingomyelin (but neither cholesterol nor phosphatidylcholine) using aromatic rich region and adjacent phosphocholine (POC) binding site, firm binding to the membrane (mainly driven by hydrophobic interactions) accompanied by the transfer of the N-terminal region to the lipid-water interface and finally pore formation after oligomerization of monomers. Cytolytic effects include red blood cells hemolysis, platelet aggregation and lysis, cytotoxic and cytostatic effects on fibroblasts. Lethality in mammals has been ascribed to severe vasospasm of coronary vessels, cardiac arrhythmia, and inotropic effects. The protein is Equinatoxin-3 of Actinia equina (Beadlet anemone).